Reading from the N-terminus, the 275-residue chain is Putative carbamate hydrolase RutD (275 aa).

An AB hydrolase-1 domain is found at 15–116 (TVVLSSGLGG…SLVVINGWTV (102 aa)).

The protein belongs to the AB hydrolase superfamily. Hydrolase RutD family.

The catalysed reaction is carbamate + 2 H(+) = NH4(+) + CO2. Functionally, involved in pyrimidine catabolism. May facilitate the hydrolysis of carbamate, a reaction that can also occur spontaneously. This is Putative carbamate hydrolase RutD from Pantoea ananatis (strain LMG 20103).